Here is a 458-residue protein sequence, read N- to C-terminus: Protein RICE SALT SENSITIVE 3 (458 aa).

Residues 1-17 (MVGSGAAGGGGGGGGGG) show a composition bias toward gly residues. 4 disordered regions span residues 1–21 (MVGSGAAGGGGGGGGGGDHAR), 220–325 (TSPS…PEGD), 354–374 (GGGADDGSKTAAAAQDAGHGG), and 386–458 (SHSN…TFLE). Residues 220 to 232 (TSPSPSSFPLKQQ) are compositionally biased toward low complexity. Residues 245–262 (HAPPQLPPGASPLFPPGP) show a composition bias toward pro residues. A compositionally biased stretch (low complexity) spans 308 to 317 (QQPMAAPQQH). The span at 413 to 436 (SSSTTSTSPSVSASTAPAPPQQQQ) shows a compositional bias: low complexity.

In terms of assembly, interacts with BHLH094, BHLH089, TIFY11A/JAZ9 and TIFY11C/JAZ11. Forms a ternary complex with TIFY11A/JAZ9 and BHLH094 in the nucleus. As to expression, expressed in root tips. Expressed at high levels in the meristematic zone and at low levels in the elongation zone of the root tip.

Its subcellular location is the nucleus. It is found in the cytoplasm. Functionally, involved in the repression of jasmonate (JA)-induced genes. Forms a ternary complex with TIFY11A/JAZ9 and BHLH094 to negatively regulate JA-responsive genes. Involved in transcriptional regulation in the root tip. Plays a regulatory role in root cell elongation. Regulates root cell elongation during salt stress. The sequence is that of Protein RICE SALT SENSITIVE 3 from Oryza sativa subsp. japonica (Rice).